Consider the following 36-residue polypeptide: Toxin Iob1 (36 aa).

3 disulfide bridges follow: cysteine 6–cysteine 21, cysteine 13–cysteine 26, and cysteine 20–cysteine 33.

It localises to the secreted. Its function is as follows. Binds reversibly and blocks N-type voltage-gated calcium channels (Cav). The chain is Toxin Iob1 from Isyndus obscurus (Assassin bug).